We begin with the raw amino-acid sequence, 213 residues long: Protein GrpE (213 aa).

A compositionally biased stretch (basic and acidic residues) spans 1–23 (MSDEKKPEAETSESLQKREEKLA). Positions 1–43 (MSDEKKPEAETSESLQKREEKLAETLASEPAAQGEAEDAAAAG) are disordered. Positions 29 to 43 (EPAAQGEAEDAAAAG) are enriched in low complexity.

It belongs to the GrpE family. In terms of assembly, homodimer.

The protein resides in the cytoplasm. In terms of biological role, participates actively in the response to hyperosmotic and heat shock by preventing the aggregation of stress-denatured proteins, in association with DnaK and GrpE. It is the nucleotide exchange factor for DnaK and may function as a thermosensor. Unfolded proteins bind initially to DnaJ; upon interaction with the DnaJ-bound protein, DnaK hydrolyzes its bound ATP, resulting in the formation of a stable complex. GrpE releases ADP from DnaK; ATP binding to DnaK triggers the release of the substrate protein, thus completing the reaction cycle. Several rounds of ATP-dependent interactions between DnaJ, DnaK and GrpE are required for fully efficient folding. The chain is Protein GrpE from Parvibaculum lavamentivorans (strain DS-1 / DSM 13023 / NCIMB 13966).